The sequence spans 87 residues: UPF0297 protein Sca_1229 (87 aa).

This sequence belongs to the UPF0297 family.

This chain is UPF0297 protein Sca_1229, found in Staphylococcus carnosus (strain TM300).